Here is a 434-residue protein sequence, read N- to C-terminus: Ataxin-10 homolog (434 aa).

Belongs to the ataxin-10 family.

The protein resides in the cytoplasm. Its subcellular location is the nucleus. Its function is as follows. May play a role in the regulation of cytokinesis. This Schizosaccharomyces pombe (strain 972 / ATCC 24843) (Fission yeast) protein is Ataxin-10 homolog (mug160).